The following is a 234-amino-acid chain: HTH-type transcriptional regulator ArcR (234 aa).

40–129 (VRHYTKGQVI…MAFLCKANDD (90 aa)) is a binding site for a nucleoside 3',5'-cyclic phosphate. The region spanning 155–228 (KFAKDRIIKL…HKNWLVSKHL (74 aa)) is the HTH crp-type domain. The segment at residues 188-207 (IQLMSDMAGISRETAGHIIH) is a DNA-binding region (H-T-H motif).

The protein resides in the cytoplasm. Functionally, positively regulates the expression of the arcABDCR operon under anaerobic conditions, thus playing an essential role in arginine catabolism. May also control the expression of genes encoding proteins which are involved in anaerobic metabolism. Can bind cyclic AMP. The polypeptide is HTH-type transcriptional regulator ArcR (arcR) (Staphylococcus aureus (strain USA300 / TCH1516)).